The sequence spans 286 residues: Elongation factor Ts (286 aa).

Positions 79–82 (TDFV) are involved in Mg(2+) ion dislocation from EF-Tu.

The protein belongs to the EF-Ts family.

The protein localises to the cytoplasm. Its function is as follows. Associates with the EF-Tu.GDP complex and induces the exchange of GDP to GTP. It remains bound to the aminoacyl-tRNA.EF-Tu.GTP complex up to the GTP hydrolysis stage on the ribosome. This is Elongation factor Ts from Wolbachia pipientis wMel.